The chain runs to 397 residues: 3-ketoacyl-CoA thiolase, mitochondrial (397 aa).

The N-terminal 16 residues, 1-16 (MALLRGVFIVAAKRTP), are a transit peptide targeting the mitochondrion; not cleaved. Lys-25 carries the post-translational modification N6-acetyllysine; alternate. Lys-25 bears the N6-succinyllysine; alternate mark. Residue Lys-45 is modified to N6-succinyllysine. The active-site Acyl-thioester intermediate is the Cys-92. Thr-119 bears the Phosphothreonine mark. Phosphoserine is present on Ser-121. Tyr-127 is subject to Phosphotyrosine. At Thr-136 the chain carries Phosphothreonine. Lys-137, Lys-143, Lys-158, Lys-171, Lys-191, and Lys-209 each carry N6-acetyllysine; alternate. Lys-137, Lys-143, Lys-158, Lys-171, Lys-191, and Lys-209 each carry N6-succinyllysine; alternate. Lys-211, Lys-212, and Lys-214 each carry N6-succinyllysine. Residues Arg-224 and Thr-227 each coordinate CoA. Residue Lys-240 is modified to N6-succinyllysine. Lys-241 bears the N6-acetyllysine mark. Ser-251 serves as a coordination point for CoA. Residues Lys-269 and Lys-270 each carry the N6-acetyllysine modification. The residue at position 305 (Lys-305) is an N6-acetyllysine; alternate. Lys-305 is modified (N6-succinyllysine; alternate). The residue at position 310 (Ser-310) is a Phosphoserine. Lys-312 carries the N6-acetyllysine; alternate modification. An N6-succinyllysine; alternate modification is found at Lys-312. A Phosphoserine modification is found at Ser-333. Lys-340 carries the N6-acetyllysine modification. Ser-344 is modified (phosphoserine). The residue at position 375 (Lys-375) is an N6-acetyllysine. Cys-382 functions as the Proton donor/acceptor in the catalytic mechanism.

Belongs to the thiolase-like superfamily. Thiolase family. In terms of assembly, homotetramer. Interacts with BNIP3. Expressed in liver, brown adipose tissue and heart (at protein level).

It is found in the mitochondrion. The enzyme catalyses an acyl-CoA + acetyl-CoA = a 3-oxoacyl-CoA + CoA. It carries out the reaction 2 acetyl-CoA = acetoacetyl-CoA + CoA. The catalysed reaction is acetyl-CoA + H2O = acetate + CoA + H(+). It catalyses the reaction propanoyl-CoA + H2O = propanoate + CoA + H(+). The enzyme catalyses butanoyl-CoA + H2O = butanoate + CoA + H(+). It carries out the reaction hexanoyl-CoA + H2O = hexanoate + CoA + H(+). The catalysed reaction is octanoyl-CoA + H2O = octanoate + CoA + H(+). It catalyses the reaction decanoyl-CoA + H2O = decanoate + CoA + H(+). The enzyme catalyses dodecanoyl-CoA + H2O = dodecanoate + CoA + H(+). It carries out the reaction tetradecanoyl-CoA + H2O = tetradecanoate + CoA + H(+). The catalysed reaction is hexadecanoyl-CoA + H2O = hexadecanoate + CoA + H(+). It functions in the pathway lipid metabolism; fatty acid beta-oxidation. With respect to regulation, the 3-oxoacetyl-CoA thiolase activity is inhibited by acetyl-CoA while the acetyl-CoA hydrolase activity is inhibited by acetoacetyl-CoA. Functionally, in the production of energy from fats, this is one of the enzymes that catalyzes the last step of the mitochondrial beta-oxidation pathway, an aerobic process breaking down fatty acids into acetyl-CoA. Using free coenzyme A/CoA, catalyzes the thiolytic cleavage of medium- to long-chain unbranched 3-oxoacyl-CoAs into acetyl-CoA and a fatty acyl-CoA shortened by two carbon atoms. Also catalyzes the condensation of two acetyl-CoA molecules into acetoacetyl-CoA and could be involved in the production of ketone bodies. Also displays hydrolase activity on various fatty acyl-CoAs. Thereby, could be responsible for the production of acetate in a side reaction to beta-oxidation. Abolishes BNIP3-mediated apoptosis and mitochondrial damage. This is 3-ketoacyl-CoA thiolase, mitochondrial (Acaa2) from Rattus norvegicus (Rat).